The following is a 462-amino-acid chain: Argininosuccinate lyase (462 aa).

Belongs to the lyase 1 family. Argininosuccinate lyase subfamily.

It is found in the cytoplasm. It catalyses the reaction 2-(N(omega)-L-arginino)succinate = fumarate + L-arginine. It functions in the pathway amino-acid biosynthesis; L-arginine biosynthesis; L-arginine from L-ornithine and carbamoyl phosphate: step 3/3. The polypeptide is Argininosuccinate lyase (Nitratiruptor sp. (strain SB155-2)).